A 303-amino-acid chain; its full sequence is UDP-N-acetylenolpyruvoylglucosamine reductase (303 aa).

In terms of domain architecture, FAD-binding PCMH-type spans 27 to 207 (KVGGISQVFY…TSISQKLQKI (181 aa)). Arg-175 is a catalytic residue. Ser-224 serves as the catalytic Proton donor. Glu-294 is a catalytic residue.

The protein belongs to the MurB family. The cofactor is FAD.

It is found in the cytoplasm. The catalysed reaction is UDP-N-acetyl-alpha-D-muramate + NADP(+) = UDP-N-acetyl-3-O-(1-carboxyvinyl)-alpha-D-glucosamine + NADPH + H(+). The protein operates within cell wall biogenesis; peptidoglycan biosynthesis. In terms of biological role, cell wall formation. In Orientia tsutsugamushi (strain Boryong) (Rickettsia tsutsugamushi), this protein is UDP-N-acetylenolpyruvoylglucosamine reductase.